A 423-amino-acid chain; its full sequence is Imidazolonepropionase (423 aa).

Fe(3+)-binding residues include His78 and His80. His78 and His80 together coordinate Zn(2+). Positions 87, 150, and 183 each coordinate 4-imidazolone-5-propanoate. Tyr150 is an N-formimidoyl-L-glutamate binding site. His247 contacts Fe(3+). Zn(2+) is bound at residue His247. 4-imidazolone-5-propanoate is bound at residue Glu250. Asp322 is a binding site for Fe(3+). Residue Asp322 participates in Zn(2+) binding. N-formimidoyl-L-glutamate-binding residues include Asn324 and Gly326. Ser327 lines the 4-imidazolone-5-propanoate pocket.

It belongs to the metallo-dependent hydrolases superfamily. HutI family. The cofactor is Zn(2+). Requires Fe(3+) as cofactor.

Its subcellular location is the cytoplasm. It catalyses the reaction 4-imidazolone-5-propanoate + H2O = N-formimidoyl-L-glutamate. It functions in the pathway amino-acid degradation; L-histidine degradation into L-glutamate; N-formimidoyl-L-glutamate from L-histidine: step 3/3. Catalyzes the hydrolytic cleavage of the carbon-nitrogen bond in imidazolone-5-propanoate to yield N-formimidoyl-L-glutamate. It is the third step in the universal histidine degradation pathway. This chain is Imidazolonepropionase, found in Bacillus cereus (strain ATCC 14579 / DSM 31 / CCUG 7414 / JCM 2152 / NBRC 15305 / NCIMB 9373 / NCTC 2599 / NRRL B-3711).